The chain runs to 186 residues: Negative modulator of initiation of replication (186 aa).

The protein belongs to the SeqA family. Homodimer. Polymerizes to form helical filaments.

Its subcellular location is the cytoplasm. Its function is as follows. Negative regulator of replication initiation, which contributes to regulation of DNA replication and ensures that replication initiation occurs exactly once per chromosome per cell cycle. Binds to pairs of hemimethylated GATC sequences in the oriC region, thus preventing assembly of replication proteins and re-initiation at newly replicated origins. Repression is relieved when the region becomes fully methylated. The polypeptide is Negative modulator of initiation of replication (Haemophilus ducreyi (strain 35000HP / ATCC 700724)).